Reading from the N-terminus, the 88-residue chain is Cell division topological specificity factor (88 aa).

This sequence belongs to the MinE family.

Its function is as follows. Prevents the cell division inhibition by proteins MinC and MinD at internal division sites while permitting inhibition at polar sites. This ensures cell division at the proper site by restricting the formation of a division septum at the midpoint of the long axis of the cell. The sequence is that of Cell division topological specificity factor from Escherichia coli (strain SMS-3-5 / SECEC).